The chain runs to 487 residues: uncharacterized protein (487 aa).

The helical transmembrane segment at 7–28 threads the bilayer; sequence HVISIFETLGAYFINIFYNFLY. 3 N-linked (GlcNAc...) asparagine; by host glycosylation sites follow: N73, N83, and N195. A coiled-coil region spans residues 196–235; sequence RSLLHQIEELTSEKKSLLADLSTLRKKYEKRQSEYRRLVQ. Over residues 294-305 the composition is skewed to polar residues; it reads TSQELTSKSPNN. A disordered region spans residues 294–324; sequence TSQELTSKSPNNYPVPHSRTIVSKPSDNYPV. A glycan (N-linked (GlcNAc...) asparagine; by host) is linked at N462.

This sequence belongs to the asfivirus B475L family.

The protein localises to the host membrane. This is an uncharacterized protein from African swine fever virus (isolate Tick/South Africa/Pretoriuskop Pr4/1996) (ASFV).